Reading from the N-terminus, the 88-residue chain is Small ribosomal subunit protein uS15 (88 aa).

This sequence belongs to the universal ribosomal protein uS15 family. Part of the 30S ribosomal subunit. Forms a bridge to the 50S subunit in the 70S ribosome, contacting the 23S rRNA.

One of the primary rRNA binding proteins, it binds directly to 16S rRNA where it helps nucleate assembly of the platform of the 30S subunit by binding and bridging several RNA helices of the 16S rRNA. Its function is as follows. Forms an intersubunit bridge (bridge B4) with the 23S rRNA of the 50S subunit in the ribosome. The polypeptide is Small ribosomal subunit protein uS15 (Acidobacterium capsulatum (strain ATCC 51196 / DSM 11244 / BCRC 80197 / JCM 7670 / NBRC 15755 / NCIMB 13165 / 161)).